A 1169-amino-acid chain; its full sequence is Translation initiation factor IF-2 (1169 aa).

Disordered regions lie at residues 69–108 (IKAKNENPKNNDNKNNKNFSNPSHPEKLSKEGLNKKPLLI) and 139–568 (ALSK…LRAA). Composition is skewed to basic and acidic residues over residues 71-83 (AKNENPKNNDNKN) and 92-102 (HPEKLSKEGLN). Residues 139–156 (ALSKNQNKTNTSVITTPN) are compositionally biased toward polar residues. Residues 157–171 (LKDKKNPSALQDKKP) show a composition bias toward basic and acidic residues. The span at 196-214 (NLANSNRNINANKINNSVN) shows a compositional bias: low complexity. Positions 231–248 (ADNNNFPKKNLNSPNVKS) are enriched in polar residues. Low complexity predominate over residues 265–281 (NTNRPNSNSRQPSSNTQ). Composition is skewed to polar residues over residues 282–294 (ISANRPGGQNRQG), 412–432 (MQLQKTNASNKEKPNISNVNK), and 439–455 (NQKTKAPNSRLNTSPSP). Residues 472–486 (GRTDWDDSAKLEALR) are compositionally biased toward basic and acidic residues. Basic residues predominate over residues 544–560 (KQFKKKKKETTRQRQKR). A tr-type G domain is found at 661-838 (KRPPVITVMG…EVEDLQANPE (178 aa)). A G1 region spans residues 670 to 677 (GHVDHGKT). A GTP-binding site is contributed by 670–677 (GHVDHGKT). The interval 695–699 (GITQH) is G2. The tract at residues 720–723 (DTPG) is G3. GTP contacts are provided by residues 720-724 (DTPGH) and 774-777 (NKID). The tract at residues 774 to 777 (NKID) is G4. The segment at 810–812 (SAI) is G5.

Belongs to the TRAFAC class translation factor GTPase superfamily. Classic translation factor GTPase family. IF-2 subfamily.

The protein resides in the cytoplasm. Its function is as follows. One of the essential components for the initiation of protein synthesis. Protects formylmethionyl-tRNA from spontaneous hydrolysis and promotes its binding to the 30S ribosomal subunits. Also involved in the hydrolysis of GTP during the formation of the 70S ribosomal complex. The sequence is that of Translation initiation factor IF-2 from Prochlorococcus marinus subsp. pastoris (strain CCMP1986 / NIES-2087 / MED4).